The chain runs to 91 residues: Dynein light chain 1, cytoplasmic (91 aa).

This sequence belongs to the dynein light chain family. Homodimer. Cytoplasmic dynein consists of two catalytic heavy chains (HCs) and a number of non-catalytic subunits which present intermediate chains (ICs), light intermediate chains (LICs) and light chains (LCs). Component of the nuclear pore complex (NPC). NPC constitutes the exclusive means of nucleocytoplasmic transport. NPCs allow the passive diffusion of ions and small molecules and the active, nuclear transport receptor-mediated bidirectional transport of macromolecules such as proteins, RNAs, ribonucleoparticles (RNPs), and ribosomal subunits across the nuclear envelope. Due to its 8-fold rotational symmetry, all subunits are present with 8 copies or multiples thereof.

The protein localises to the cytoplasm. It is found in the cytoskeleton. Its subcellular location is the nucleus. It localises to the nuclear pore complex. Acts as one of several non-catalytic accessory components of the cytoplasmic dynein complex that are thought to be involved in linking dynein to cargos and to adapter proteins that regulate dynein function. Cytoplasmic dynein 1 acts as a motor for the intracellular retrograde motility of vesicles and organelles along microtubules. May play a role in changing or maintaining the spatial distribution of cytoskeletal structures. Also a component of the nuclear pore complex. This Debaryomyces hansenii (strain ATCC 36239 / CBS 767 / BCRC 21394 / JCM 1990 / NBRC 0083 / IGC 2968) (Yeast) protein is Dynein light chain 1, cytoplasmic (DYN2).